The sequence spans 835 residues: Phosphatidylinositol 4-kinase beta (835 aa).

3 disordered regions span residues 1 to 61, 99 to 139, and 267 to 341; these read MGDT…PLDV, SSAS…VRRR, and PSSQ…PVRL. The segment covering 19–59 has biased composition (low complexity); the sequence is SPSTSTTSSLSLPSSPSSGPHPLTSSSPSTSEGLPTSSPPL. Residues 59–262 enclose the PIK helical domain; it reads LDVISEGLGE…GTKLRKLILS (204 aa). Composition is skewed to basic and acidic residues over residues 125-134 and 267-276; these read ISEEEVEPIK and PSSQRIRREV. Residues 277–288 show a composition bias toward pro residues; that stretch reads PQPPPPYPPPLH. The segment covering 311-332 has biased composition (polar residues); that stretch reads DATVSISLSSNLKRTASNPKVE. Residues 554 to 820 form the PI3K/PI4K catalytic domain; sequence EPWQEKVRRI…MVDGSMRSIT (267 aa). Residues 560–566 are G-loop; that stretch reads VRRIREG. Residues 687-695 are catalytic loop; that stretch reads QVKDRHNGN. Positions 706 to 730 are activation loop; it reads HIDFGFILSSSPRNLGFETSAFKLT.

This sequence belongs to the PI3/PI4-kinase family. Type III PI4K subfamily. It depends on Mg(2+) as a cofactor. Requires Mn(2+) as cofactor. In terms of tissue distribution, expressed in the inner ear otic vesicles.

The protein resides in the endomembrane system. It localises to the mitochondrion outer membrane. The protein localises to the rough endoplasmic reticulum membrane. It catalyses the reaction a 1,2-diacyl-sn-glycero-3-phospho-(1D-myo-inositol) + ATP = a 1,2-diacyl-sn-glycero-3-phospho-(1D-myo-inositol 4-phosphate) + ADP + H(+). Phosphorylates phosphatidylinositol (PI) in the first committed step in the production of the second messenger inositol-1,4,5,-trisphosphate (PIP). May play an important role the in inner ear development. This is Phosphatidylinositol 4-kinase beta (pi4kb) from Danio rerio (Zebrafish).